The following is a 260-amino-acid chain: Homeobox protein CDX-1 (260 aa).

Residues 149–208 (KDKYRVVYTDHQRLELEKEFHYSRYITIRRKAELAAALGLTERQVKIWFQNRRAKERKVN) constitute a DNA-binding region (homeobox). An interaction with DNA region spans residues 152 to 173 (YRVVYTDHQRLELEKEFHYSRY). Positions 191–202 (RQVKIWFQNRRA) are interaction with 5-mCpG DNA. A disordered region spans residues 204 to 260 (ERKVNKKKLQQQSQPTSTTTPTPPAVGTPGPMGTLCSGSAPSLVSSSPLTIKEEFMP). Low complexity-rich tracts occupy residues 213–223 (QQQSQPTSTTT) and 240–252 (SGSA…SSPL).

The protein belongs to the Caudal homeobox family.

It localises to the nucleus. Its function is as follows. Plays a role in transcriptional regulation. Involved in activated KRAS-mediated transcriptional activation of PRKD1. Binds to the PRKD1 promoter. Could play a role in the terminal differentiation of the intestine. Binds preferentially to methylated DNA. In Gallus gallus (Chicken), this protein is Homeobox protein CDX-1 (CDX1).